The primary structure comprises 704 residues: MAKITKTFQYGKHTVTLETGEVARQASGAVIVKMDDTVLLVTAVAAKTAREGQDFFPLTVDYQEKFYAGGRIPGGFFKREGRATEKETLISRLIDRPIRPLFPEDYKNEVQIIATVMSMNPDIDGDIAALIGASAALSLAGTPFNGPIGAAKVGYKNGEYILNPTITELKDSQLELVVAGTANAVLMVESEAALLSEEVMLGAVTFGHREMQKVINIINELTVEAGTKPSTWVAPAKNTALISALKEAVGAQLAGAFQVRDKLQRRDAISAIKKDVLESLAGRVASEGWSSAELSKEFGELEYHTMRDSVLETKVRIDGRALDTVRPISVQAGVLPRTHGSALFTRGETQAIVVTTLGTARDGQVIDAVAGEYKENFLFHYNFPPYSVGECGRFGAPKRREIGHGRLAKRGVLAVMPSLEEFPYTIRVVSEITESNGSSSMASVCGSSLALMDAGVPVKAPVAGIAMGLVKEDDRFVVLSDILGDEDHLGDMDFKVAGTAEGVSALQMDIKIEGITEEIMKQALQQAKAGRLHILGEMSKALTTPRQELSDYAPRLLTIKIHPDKIREVIGKGGSTIQAITKETGTQIDIQDDGTIIIASVNAIAAQAAKSRIEQITSDVEPGRIYEGKVAKIMDFGAFVTILPGKDGLVHVSQISSERVEKVGDKLKEGDLVRVKVLEVDKQGRIRLSIKAVEEGEGVPASAE.

Residues aspartate 487 and aspartate 493 each coordinate Mg(2+). Residues 554–613 (PRLLTIKIHPDKIREVIGKGGSTIQAITKETGTQIDIQDDGTIIIASVNAIAAQAAKSRI) form the KH domain. The 69-residue stretch at 623-691 (GRIYEGKVAK…KQGRIRLSIK (69 aa)) folds into the S1 motif domain.

Belongs to the polyribonucleotide nucleotidyltransferase family. Component of the RNA degradosome, which is a multiprotein complex involved in RNA processing and mRNA degradation. It depends on Mg(2+) as a cofactor.

The protein resides in the cytoplasm. The enzyme catalyses RNA(n+1) + phosphate = RNA(n) + a ribonucleoside 5'-diphosphate. Functionally, involved in mRNA degradation. Catalyzes the phosphorolysis of single-stranded polyribonucleotides processively in the 3'- to 5'-direction. This chain is Polyribonucleotide nucleotidyltransferase, found in Xanthomonas campestris pv. campestris (strain B100).